We begin with the raw amino-acid sequence, 286 residues long: Tryptophan 2,3-dioxygenase (286 aa).

Residues 55 to 59 (FIIIH), Y117, and R121 contribute to the substrate site. H244 provides a ligand contact to heme. T258 lines the substrate pocket.

Belongs to the tryptophan 2,3-dioxygenase family. Homotetramer. Requires heme as cofactor.

It carries out the reaction L-tryptophan + O2 = N-formyl-L-kynurenine. The protein operates within amino-acid degradation; L-tryptophan degradation via kynurenine pathway; L-kynurenine from L-tryptophan: step 1/2. In terms of biological role, heme-dependent dioxygenase that catalyzes the oxidative cleavage of the L-tryptophan (L-Trp) pyrrole ring and converts L-tryptophan to N-formyl-L-kynurenine. Catalyzes the oxidative cleavage of the indole moiety. This is Tryptophan 2,3-dioxygenase from Shewanella woodyi (strain ATCC 51908 / MS32).